Reading from the N-terminus, the 296-residue chain is Acetaldehyde dehydrogenase (296 aa).

15-18 provides a ligand contact to NAD(+); sequence SGNI. Cys132 serves as the catalytic Acyl-thioester intermediate. NAD(+)-binding positions include 164–172 and Asn274; that span reads SAGPATRAN.

This sequence belongs to the acetaldehyde dehydrogenase family. Interacts with MhpE.

The enzyme catalyses acetaldehyde + NAD(+) + CoA = acetyl-CoA + NADH + H(+). It participates in aromatic compound metabolism; 3-phenylpropanoate degradation. In terms of biological role, catalyzes the conversion of acetaldehyde to acetyl-CoA, using NAD(+) and coenzyme A. Is the final enzyme in the meta-cleavage pathway for the degradation of aromatic compounds. In Pectobacterium atrosepticum (strain SCRI 1043 / ATCC BAA-672) (Erwinia carotovora subsp. atroseptica), this protein is Acetaldehyde dehydrogenase.